The chain runs to 372 residues: Chaperone protein DnaJ (372 aa).

In terms of domain architecture, J spans 5 to 69 (EFYDRLGVSK…QKRAAYDQYG (65 aa)). The CR-type zinc finger occupies 129–211 (GTEKEVKYHR…CHGTGHEKQA (83 aa)). Zn(2+)-binding residues include cysteine 142, cysteine 145, cysteine 159, cysteine 162, cysteine 185, cysteine 188, cysteine 199, and cysteine 202. CXXCXGXG motif repeat units follow at residues 142–149 (CRTCNGSG), 159–166 (CGRCHGAG), 185–192 (CDVCHGRG), and 199–206 (CTTCHGTG).

This sequence belongs to the DnaJ family. In terms of assembly, homodimer. It depends on Zn(2+) as a cofactor.

It is found in the cytoplasm. Its function is as follows. Participates actively in the response to hyperosmotic and heat shock by preventing the aggregation of stress-denatured proteins and by disaggregating proteins, also in an autonomous, DnaK-independent fashion. Unfolded proteins bind initially to DnaJ; upon interaction with the DnaJ-bound protein, DnaK hydrolyzes its bound ATP, resulting in the formation of a stable complex. GrpE releases ADP from DnaK; ATP binding to DnaK triggers the release of the substrate protein, thus completing the reaction cycle. Several rounds of ATP-dependent interactions between DnaJ, DnaK and GrpE are required for fully efficient folding. Also involved, together with DnaK and GrpE, in the DNA replication of plasmids through activation of initiation proteins. The polypeptide is Chaperone protein DnaJ (Streptococcus pneumoniae (strain ATCC BAA-255 / R6)).